Reading from the N-terminus, the 131-residue chain is T3C protein (131 aa).

The sequence is that of T3C protein from Ovis aries (Sheep).